We begin with the raw amino-acid sequence, 91 residues long: MLTFWHWKWLGIKNTEFKCVKGKLYLSPIKDLFNNEIIAYDLVRSPNSEQITQMMKQAVARLAGAKPILHSDQGWQYQMIGYQNILRENGI.

The 91-residue stretch at methionine 1–isoleucine 91 folds into the Integrase catalytic domain.

This is an uncharacterized protein from Haemophilus influenzae (strain ATCC 51907 / DSM 11121 / KW20 / Rd).